The primary structure comprises 71 residues: Beta-defensin 9 (71 aa).

Positions 1-23 are cleaved as a signal peptide; it reads MRTLCSLLLICCLLFSYDTPVVG. 3 disulfides stabilise this stretch: Cys-37-Cys-66, Cys-44-Cys-59, and Cys-49-Cys-67.

Belongs to the beta-defensin family.

It is found in the secreted. In terms of biological role, has antibacterial activity. The polypeptide is Beta-defensin 9 (Defb9) (Rattus norvegicus (Rat)).